We begin with the raw amino-acid sequence, 139 residues long: Large ribosomal subunit protein uL16 (139 aa).

The protein belongs to the universal ribosomal protein uL16 family. As to quaternary structure, part of the 50S ribosomal subunit.

Its function is as follows. Binds 23S rRNA and is also seen to make contacts with the A and possibly P site tRNAs. The polypeptide is Large ribosomal subunit protein uL16 (Chlorobium luteolum (strain DSM 273 / BCRC 81028 / 2530) (Pelodictyon luteolum)).